Consider the following 82-residue polypeptide: ATP synthase subunit c, chloroplastic (82 aa).

The next 2 membrane-spanning stretches (helical) occupy residues 3 to 23 (PIVA…AAIG) and 57 to 77 (FAFM…LLFA).

Belongs to the ATPase C chain family. F-type ATPases have 2 components, F(1) - the catalytic core - and F(0) - the membrane proton channel. F(1) has five subunits: alpha(3), beta(3), gamma(1), delta(1), epsilon(1). F(0) has four main subunits: a(1), b(1), b'(1) and c(10-14). The alpha and beta chains form an alternating ring which encloses part of the gamma chain. F(1) is attached to F(0) by a central stalk formed by the gamma and epsilon chains, while a peripheral stalk is formed by the delta, b and b' chains.

It is found in the plastid. The protein resides in the chloroplast thylakoid membrane. Its function is as follows. F(1)F(0) ATP synthase produces ATP from ADP in the presence of a proton or sodium gradient. F-type ATPases consist of two structural domains, F(1) containing the extramembraneous catalytic core and F(0) containing the membrane proton channel, linked together by a central stalk and a peripheral stalk. During catalysis, ATP synthesis in the catalytic domain of F(1) is coupled via a rotary mechanism of the central stalk subunits to proton translocation. Functionally, key component of the F(0) channel; it plays a direct role in translocation across the membrane. A homomeric c-ring of between 10-14 subunits forms the central stalk rotor element with the F(1) delta and epsilon subunits. The sequence is that of ATP synthase subunit c, chloroplastic from Chlorella vulgaris (Green alga).